A 120-amino-acid polypeptide reads, in one-letter code: NAD(P)H-quinone oxidoreductase subunit 3, chloroplastic (120 aa).

A run of 3 helical transmembrane segments spans residues 9–29 (IFWA…LISG), 64–84 (MFAL…PWAM), and 88–108 (VLGV…IVGS).

It belongs to the complex I subunit 3 family. In terms of assembly, NDH is composed of at least 16 different subunits, 5 of which are encoded in the nucleus.

The protein localises to the plastid. It is found in the chloroplast thylakoid membrane. The catalysed reaction is a plastoquinone + NADH + (n+1) H(+)(in) = a plastoquinol + NAD(+) + n H(+)(out). It carries out the reaction a plastoquinone + NADPH + (n+1) H(+)(in) = a plastoquinol + NADP(+) + n H(+)(out). NDH shuttles electrons from NAD(P)H:plastoquinone, via FMN and iron-sulfur (Fe-S) centers, to quinones in the photosynthetic chain and possibly in a chloroplast respiratory chain. The immediate electron acceptor for the enzyme in this species is believed to be plastoquinone. Couples the redox reaction to proton translocation, and thus conserves the redox energy in a proton gradient. The chain is NAD(P)H-quinone oxidoreductase subunit 3, chloroplastic from Buxus microphylla (Littleleaf boxwood).